The chain runs to 131 residues: CGIDYYTRAPGYNNESFVIYMFIVHFLIPLFIISFCYGNLLCAVKAAAAAQEESETTQRAEREVTRMVIMMVISYLVSWVPYASVAWYIFSNQGSEFGPVFMTIPAFFAKSSALYNPLIYVLMNKQFRHCM.

Residues 1-16 (CGIDYYTRAPGYNNES) are Extracellular-facing. N14 carries an N-linked (GlcNAc...) asparagine glycan. A helical transmembrane segment spans residues 17-38 (FVIYMFIVHFLIPLFIISFCYG). Residues 39–66 (NLLCAVKAAAAAQEESETTQRAEREVTR) lie on the Cytoplasmic side of the membrane. The chain crosses the membrane as a helical span at residues 67–88 (MVIMMVISYLVSWVPYASVAWY). The Extracellular portion of the chain corresponds to 89–100 (IFSNQGSEFGPV). Residues 101 to 122 (FMTIPAFFAKSSALYNPLIYVL) traverse the membrane as a helical segment. At K110 the chain carries N6-(retinylidene)lysine. The Cytoplasmic portion of the chain corresponds to 123–131 (MNKQFRHCM).

Belongs to the G-protein coupled receptor 1 family. Opsin subfamily. Phosphorylated on some or all of the serine and threonine residues present in the C-terminal region. In terms of processing, contains one covalently linked retinal chromophore.

The protein localises to the membrane. It is found in the cell projection. The protein resides in the cilium. It localises to the photoreceptor outer segment. Photoreceptor required for image-forming vision at low light intensity. While most salt water fish species use retinal as chromophore, most freshwater fish use 3-dehydroretinal, or a mixture of retinal and 3-dehydroretinal. Light-induced isomerization of 11-cis to all-trans retinal triggers a conformational change that activates signaling via G-proteins. Subsequent receptor phosphorylation mediates displacement of the bound G-protein alpha subunit by arrestin and terminates signaling. This is Rhodopsin (rho) from Coregonus autumnalis (Arctic cisco).